Here is a 186-residue protein sequence, read N- to C-terminus: Adenylate kinase (186 aa).

ATP is bound at residue 12–17; the sequence is GAGKGT. The interval 32–61 is NMP; the sequence is STGDLLRAEVNAQSPLGKEAALIMNKGELV. AMP contacts are provided by residues Thr-33, Arg-38, 59–61, 86–89, and Gln-93; these read ELV and GFPR. Residues 127-133 are LID; sequence SRGRSDD. Arg-128 contributes to the ATP binding site. The AMP site is built by Arg-130 and Arg-141. Residue Gly-169 participates in ATP binding.

Belongs to the adenylate kinase family. Monomer.

The protein localises to the cytoplasm. The catalysed reaction is AMP + ATP = 2 ADP. It participates in purine metabolism; AMP biosynthesis via salvage pathway; AMP from ADP: step 1/1. Its function is as follows. Catalyzes the reversible transfer of the terminal phosphate group between ATP and AMP. Plays an important role in cellular energy homeostasis and in adenine nucleotide metabolism. The chain is Adenylate kinase from Prochlorococcus marinus (strain MIT 9211).